A 297-amino-acid polypeptide reads, in one-letter code: Phosphoribosylaminoimidazole-succinocarboxamide synthase (297 aa).

The protein belongs to the SAICAR synthetase family.

The catalysed reaction is 5-amino-1-(5-phospho-D-ribosyl)imidazole-4-carboxylate + L-aspartate + ATP = (2S)-2-[5-amino-1-(5-phospho-beta-D-ribosyl)imidazole-4-carboxamido]succinate + ADP + phosphate + 2 H(+). Its pathway is purine metabolism; IMP biosynthesis via de novo pathway; 5-amino-1-(5-phospho-D-ribosyl)imidazole-4-carboxamide from 5-amino-1-(5-phospho-D-ribosyl)imidazole-4-carboxylate: step 1/2. This Corynebacterium diphtheriae (strain ATCC 700971 / NCTC 13129 / Biotype gravis) protein is Phosphoribosylaminoimidazole-succinocarboxamide synthase.